Consider the following 948-residue polypeptide: Protein translocase subunit SecA (948 aa).

ATP contacts are provided by residues glutamine 90, 108-112, and aspartate 509; that span reads GEGKT.

It belongs to the SecA family. In terms of assembly, monomer and homodimer. Part of the essential Sec protein translocation apparatus which comprises SecA, SecYEG and auxiliary proteins SecDF. Other proteins may also be involved.

The protein localises to the cell inner membrane. Its subcellular location is the cellular thylakoid membrane. It localises to the cytoplasm. It catalyses the reaction ATP + H2O + cellular proteinSide 1 = ADP + phosphate + cellular proteinSide 2.. Part of the Sec protein translocase complex. Interacts with the SecYEG preprotein conducting channel. Has a central role in coupling the hydrolysis of ATP to the transfer of proteins into and across the cell membrane, serving as an ATP-driven molecular motor driving the stepwise translocation of polypeptide chains across the membrane. Functionally, probably participates in protein translocation into and across both the cytoplasmic and thylakoid membranes in cyanobacterial cells. The polypeptide is Protein translocase subunit SecA (Prochlorococcus marinus (strain MIT 9313)).